The chain runs to 411 residues: Carbamoyl phosphate synthase arginine-specific small chain (411 aa).

Positions 50, 232, and 234 each coordinate L-glutamine. The region spanning 185-376 (NVALIDCGVK…FDNIEKYQLQ (192 aa)) is the Glutamine amidotransferase type-1 domain. Cysteine 264 (nucleophile) is an active-site residue. L-glutamine-binding residues include leucine 265, glutamine 268, asparagine 306, glycine 308, and tyrosine 309. Catalysis depends on residues histidine 349 and glutamate 351.

Belongs to the CarA family. In terms of assembly, heterodimer composed of 2 chains; the small (or glutamine) chain promotes the hydrolysis of glutamine to ammonia, which is used by the large (or ammonia) chain to synthesize carbamoyl phosphate.

The protein resides in the cytoplasm. It catalyses the reaction hydrogencarbonate + L-glutamine + 2 ATP + H2O = carbamoyl phosphate + L-glutamate + 2 ADP + phosphate + 2 H(+). It carries out the reaction L-glutamine + H2O = L-glutamate + NH4(+). It participates in amino-acid biosynthesis; L-arginine biosynthesis; carbamoyl phosphate from bicarbonate: step 1/1. In terms of biological role, small subunit of the arginine-specific carbamoyl phosphate synthase (CPSase). CPSase catalyzes the formation of carbamoyl phosphate from the ammonia moiety of glutamine, carbonate, and phosphate donated by ATP, constituting the first step of 2 biosynthetic pathways, one leading to arginine and/or urea and the other to pyrimidine nucleotides. The small subunit (glutamine amidotransferase) binds and cleaves glutamine to supply the large subunit with the substrate ammonia. This chain is Carbamoyl phosphate synthase arginine-specific small chain (CPA1), found in Saccharomyces cerevisiae (strain ATCC 204508 / S288c) (Baker's yeast).